We begin with the raw amino-acid sequence, 93 residues long: Small ribosomal subunit protein uS17 (93 aa).

This sequence belongs to the universal ribosomal protein uS17 family. As to quaternary structure, part of the 30S ribosomal subunit.

One of the primary rRNA binding proteins, it binds specifically to the 5'-end of 16S ribosomal RNA. This Bordetella bronchiseptica (strain ATCC BAA-588 / NCTC 13252 / RB50) (Alcaligenes bronchisepticus) protein is Small ribosomal subunit protein uS17.